The sequence spans 201 residues: Imidazoleglycerol-phosphate dehydratase (201 aa).

It belongs to the imidazoleglycerol-phosphate dehydratase family.

Its subcellular location is the cytoplasm. It catalyses the reaction D-erythro-1-(imidazol-4-yl)glycerol 3-phosphate = 3-(imidazol-4-yl)-2-oxopropyl phosphate + H2O. The protein operates within amino-acid biosynthesis; L-histidine biosynthesis; L-histidine from 5-phospho-alpha-D-ribose 1-diphosphate: step 6/9. This chain is Imidazoleglycerol-phosphate dehydratase, found in Prochlorococcus marinus (strain MIT 9301).